Consider the following 95-residue polypeptide: Integration host factor subunit beta (95 aa).

This sequence belongs to the bacterial histone-like protein family. In terms of assembly, heterodimer of an alpha and a beta chain.

Functionally, this protein is one of the two subunits of integration host factor, a specific DNA-binding protein that functions in genetic recombination as well as in transcriptional and translational control. The chain is Integration host factor subunit beta from Shewanella halifaxensis (strain HAW-EB4).